The following is a 758-amino-acid chain: Relaxin receptor 1 (758 aa).

At 1–408 (MTSGPFFFCV…LENLLASIIQ (408 aa)) the chain is on the extracellular side. The LDL-receptor class A domain maps to 26 to 63 (SCPLGSFPCGNISKCLPQLLHCNGVDDCGNQADEDNCG). Intrachain disulfides connect cysteine 27-cysteine 40, cysteine 34-cysteine 53, and cysteine 47-cysteine 62. Asparagine 36 carries an N-linked (GlcNAc...) asparagine glycan. 6 residues coordinate Ca(2+): leucine 45, asparagine 48, valine 50, aspartate 52, aspartate 58, and glutamate 59. LRR repeat units follow at residues 105-125 (LCRD…PSVS), 126-148 (SNVT…SFRK), 149-172 (YHDL…AFRG), 173-196 (LHSL…VFED), 198-220 (HRLE…TFYG), 221-244 (LNSL…PLCQ), 246-269 (MPRL…TFIS), 270-293 (CNNL…AFTH), 294-317 (LQKL…IFKD), 319-341 (KELS…QFDY), and 342-365 (LAKL…MFRP). N-linked (GlcNAc...) asparagine glycosylation is present at asparagine 127. 2 N-linked (GlcNAc...) asparagine glycosylation sites follow: asparagine 264 and asparagine 272. Asparagine 325 carries an N-linked (GlcNAc...) asparagine glycan. N-linked (GlcNAc...) asparagine glycosylation is present at asparagine 368. The chain crosses the membrane as a helical span at residues 409 to 429 (RVFVWVVSAITCFGNIFVICM). Residues 430 to 443 (RPYIRSENKLHAMS) lie on the Cytoplasmic side of the membrane. A helical membrane pass occupies residues 444–464 (IMSLCCADCLMGVYLFVIGAF). The Extracellular segment spans residues 465–486 (DLKFRGEYRKHAQPWMESVHCQ). Cysteine 485 and cysteine 563 form a disulfide bridge. Residues 487–507 (FMGSLAVLSTEVSVLLLTFLT) form a helical membrane-spanning segment. At 508 to 527 (LEKYICIVYPFRCLRPRKCR) the chain is on the cytoplasmic side. Residues 528–548 (TVAVLIFIWITGFIVAFAPLG) form a helical membrane-spanning segment. Residues 549–577 (NKEFFKNYYGTNGVCFPLHSEDTGSTGAQ) are Extracellular-facing. The chain crosses the membrane as a helical span at residues 578–598 (IYSVVIFLGINLVAFIIIVFS). Over 599-629 (YGSMFYSVHQSTITATEIQKQVKKEMILAKR) the chain is Cytoplasmic. A helical membrane pass occupies residues 630–650 (FFFIVFTDALCWIPIFILKFL). At 651 to 660 (SLIRVEIPDT) the chain is on the extracellular side. The chain crosses the membrane as a helical span at residues 661-681 (ITSWVVIFILPINSALNPIIY). Residues 682–758 (TLTTRPFKEM…SRSSRLNSYS (77 aa)) lie on the Cytoplasmic side of the membrane.

It belongs to the G-protein coupled receptor 1 family. As to quaternary structure, interacts with C1QTNF8. Detected in brain cortex, and at low levels in testis.

It is found in the cell membrane. In terms of biological role, receptor for relaxins. The activity of this receptor is mediated by G proteins leading to stimulation of adenylate cyclase and an increase of cAMP. Binding of the ligand may also activate a tyrosine kinase pathway that inhibits the activity of a phosphodiesterase that degrades cAMP. This chain is Relaxin receptor 1 (Rxfp1), found in Rattus norvegicus (Rat).